The sequence spans 429 residues: GDP-fucose protein O-fucosyltransferase 2 (429 aa).

The N-terminal stretch at M1–A21 is a signal peptide. P53–N57 contacts GDP-beta-L-fucose. E54 functions as the Proton acceptor in the catalytic mechanism. C161 and C192 are disulfide-bonded. N189, N209, and N259 each carry an N-linked (GlcNAc...) asparagine glycan. GDP-beta-L-fucose contacts are provided by residues H292 to R294, D371, and T388 to F389. C412 and C419 are oxidised to a cystine.

The protein belongs to the glycosyltransferase 68 family. Isoform A is expressed in fetal liver and peripheral blood lymphocytes. Isoform B is expressed in spleen, lung, testis, bone marrow, thymus, pancreas, prostate, fetal brain, fetal liver and fetal kidney. Isoform C is expressed in brain, heart, spleen, liver, lung, stomach, testis, placenta, skin, thymus, pancreas, mammary gland, prostate, fetal brain, fetal liver and fetal heart.

It localises to the endoplasmic reticulum. It is found in the golgi apparatus. It catalyses the reaction L-seryl-[protein] + GDP-beta-L-fucose = 3-O-(alpha-L-fucosyl)-L-seryl-[protein] + GDP + H(+). The enzyme catalyses L-threonyl-[protein] + GDP-beta-L-fucose = 3-O-(alpha-L-fucosyl)-L-threonyl-[protein] + GDP + H(+). It participates in protein modification; protein glycosylation. With respect to regulation, inhibited by EDTA and by Zn(2+). Catalyzes the reaction that attaches fucose through an O-glycosidic linkage to a conserved serine or threonine residue in the consensus sequence C1-X-X-S/T-C2 of thrombospondin type I repeats (TSRs) where C1 and C2 are the first and second cysteines of the repeat, respectively. O-fucosylates members of several protein families including the ADAMTS, the thrombospondin (TSP) and spondin families. Required for the proper secretion of ADAMTS family members such as ADAMTSL1 and ADAMTS13. The O-fucosylation of TSRs is also required for restricting epithelial to mesenchymal transition (EMT), maintaining the correct patterning of mesoderm and localization of the definite endoderm. This is GDP-fucose protein O-fucosyltransferase 2 (POFUT2) from Homo sapiens (Human).